A 58-amino-acid polypeptide reads, in one-letter code: Small ribosomal subunit protein bS21 (58 aa).

A disordered region spans residues 35-58; sequence REHYESPSVRRKKKSEAARKRRYK. The segment covering 43-58 has biased composition (basic residues); it reads VRRKKKSEAARKRRYK.

Belongs to the bacterial ribosomal protein bS21 family.

This is Small ribosomal subunit protein bS21 from Acetivibrio thermocellus (strain ATCC 27405 / DSM 1237 / JCM 9322 / NBRC 103400 / NCIMB 10682 / NRRL B-4536 / VPI 7372) (Clostridium thermocellum).